The primary structure comprises 748 residues: Rho GTPase-activating protein 24 (748 aa).

The interval 1–20 is disordered; the sequence is MEENNDSTENPQQGQGRQNA. Residues 7–18 are compositionally biased toward polar residues; it reads STENPQQGQGRQ. The PH domain maps to 19–125; that stretch reads NAIKCGWLRK…WVKSIRRVIW (107 aa). Positions 135 to 329 constitute a Rho-GAP domain; the sequence is QKLEDTVRYE…VMISKHDCLF (195 aa). Disordered regions lie at residues 354-476 and 582-641; these read TMGQ…GTHS and DFFG…SSNH. Composition is skewed to polar residues over residues 356 to 374 and 382 to 405; these read GQLQ…SRQC and PQRS…SPKN. A phosphoserine mark is found at serine 369, serine 391, serine 396, serine 398, serine 402, serine 413, serine 415, and serine 437. Positions 432–476 are enriched in polar residues; it reads IVTNGSFSSSNAEGLEKTQTTPNGSLQARRSSSLKVSGTKMGTHS. A Phosphothreonine modification is found at threonine 452. Over residues 600 to 615 the composition is skewed to basic and acidic residues; it reads DLSHPRDYESKSDHRS. Residues 617 to 641 show a composition bias toward low complexity; it reads GGRSSRATSSSDNSETFVGNSSSNH. A coiled-coil region spans residues 649-729; that stretch reads SSLKQEMTKQ…KEMEQFFSTF (81 aa).

Interacts with FLNA. In terms of processing, phosphorylated by ROCK, leading to activate the RacGAP activity. In terms of tissue distribution, isoform 1 is widely expressed with a higher level in kidney. Isoform 2 is mainly expressed in endothelial cells.

It localises to the cytoplasm. Its subcellular location is the cytoskeleton. It is found in the cell junction. The protein localises to the adherens junction. The protein resides in the focal adhesion. It localises to the cell projection. Its function is as follows. Rho GTPase-activating protein involved in cell polarity, cell morphology and cytoskeletal organization. Acts as a GTPase activator for the Rac-type GTPase by converting it to an inactive GDP-bound state. Controls actin remodeling by inactivating Rac downstream of Rho leading to suppress leading edge protrusion and promotes cell retraction to achieve cellular polarity. Able to suppress RAC1 and CDC42 activity in vitro. Overexpression induces cell rounding with partial or complete disruption of actin stress fibers and formation of membrane ruffles, lamellipodia, and filopodia. Isoform 2 is a vascular cell-specific GAP involved in modulation of angiogenesis. This is Rho GTPase-activating protein 24 (ARHGAP24) from Homo sapiens (Human).